Reading from the N-terminus, the 83-residue chain is Normal mucosa of esophagus-specific gene 1 protein (83 aa).

This sequence belongs to the complex I NDUFA4 subunit family. As to expression, strongly expressed in vertebrae, brain, intestine and stomach.

It localises to the nucleus. The sequence is that of Normal mucosa of esophagus-specific gene 1 protein (Nmes1) from Mus musculus (Mouse).